The primary structure comprises 244 residues: Pyridoxal phosphate homeostasis protein (244 aa).

The residue at position 37 (Lys37) is an N6-(pyridoxal phosphate)lysine.

Belongs to the pyridoxal phosphate-binding protein YggS/PROSC family.

Its function is as follows. Pyridoxal 5'-phosphate (PLP)-binding protein, which may be involved in intracellular homeostatic regulation of pyridoxal 5'-phosphate (PLP), the active form of vitamin B6. This is Pyridoxal phosphate homeostasis protein from Caenorhabditis elegans.